Reading from the N-terminus, the 128-residue chain is Ribonuclease P protein component (128 aa).

This sequence belongs to the RnpA family. As to quaternary structure, consists of a catalytic RNA component (M1 or rnpB) and a protein subunit.

The catalysed reaction is Endonucleolytic cleavage of RNA, removing 5'-extranucleotides from tRNA precursor.. Its function is as follows. RNaseP catalyzes the removal of the 5'-leader sequence from pre-tRNA to produce the mature 5'-terminus. It can also cleave other RNA substrates such as 4.5S RNA. The protein component plays an auxiliary but essential role in vivo by binding to the 5'-leader sequence and broadening the substrate specificity of the ribozyme. In Synechococcus sp. (strain CC9902), this protein is Ribonuclease P protein component.